The primary structure comprises 338 residues: MAIRIAINGFGRIGRSVLRALYESGRRAEISVVAINELASAEGMAHLLKYDSSHGRFAWDVRQECDSLYVGDDIIRLIHQSEIEQLPWSELGIDVVLDCSGVYGSREDGEAHVASGAKKVLFAHPGGHDLDATVVYGVNHQDLRAEHRIVSNASCTTNCIIPIIQLLDIAYGIESGTVTTIHSSMNDQPVIDAYHQDLRRTRAASQSIIPVDTKLAAGITRIFPKFCDRFEAISVRVPTINVTAIDLSVSVTHPVGVAEVNQLLQKAARGAFRGIVDYTELPLVSMDFNHDPHSAIVDGTQTRVSGQHLIKTLVWCDNEWGFANRMLDTTLAMAKSGF.

NAD(+) is bound at residue 12–13 (RI). Substrate contacts are provided by residues 154-156 (SCT), arginine 200, 213-214 (TK), and arginine 236. Cysteine 155 acts as the Nucleophile in catalysis. Position 318 (asparagine 318) interacts with NAD(+).

The protein belongs to the glyceraldehyde-3-phosphate dehydrogenase family. Epd subfamily. Homotetramer.

It localises to the cytoplasm. The enzyme catalyses D-erythrose 4-phosphate + NAD(+) + H2O = 4-phospho-D-erythronate + NADH + 2 H(+). The protein operates within cofactor biosynthesis; pyridoxine 5'-phosphate biosynthesis; pyridoxine 5'-phosphate from D-erythrose 4-phosphate: step 1/5. Its function is as follows. Catalyzes the NAD-dependent conversion of D-erythrose 4-phosphate to 4-phosphoerythronate. This Yersinia pestis bv. Antiqua (strain Antiqua) protein is D-erythrose-4-phosphate dehydrogenase.